The following is a 94-amino-acid chain: MLKPIGNRVIIEKKEQEQTTKSGIVLTDSAKEKSNEGVIVAVGTGRLLNDGTRVTPEVKEGDRVVFQQYAGTEVKRDNETYLVLNEEDILAVIE.

The protein belongs to the GroES chaperonin family. Heptamer of 7 subunits arranged in a ring. Interacts with the chaperonin GroEL.

The protein resides in the cytoplasm. Together with the chaperonin GroEL, plays an essential role in assisting protein folding. The GroEL-GroES system forms a nano-cage that allows encapsulation of the non-native substrate proteins and provides a physical environment optimized to promote and accelerate protein folding. GroES binds to the apical surface of the GroEL ring, thereby capping the opening of the GroEL channel. The polypeptide is Co-chaperonin GroES (Staphylococcus aureus (strain Mu50 / ATCC 700699)).